The following is a 544-amino-acid chain: Cannabidiolic acid synthase (544 aa).

A signal peptide spans 1–28; that stretch reads MKCSTFSFWFVCKIIFFFFSFNIQTSIA. Residues cysteine 37 and cysteine 99 are joined by a disulfide bond. Residues asparagine 45 and asparagine 65 are each glycosylated (N-linked (GlcNAc...) asparagine). In terms of domain architecture, FAD-binding PCMH-type spans 77 to 251; that stretch reads TTPKPLVIVT…VAWKIRLVAV (175 aa). FAD contacts are provided by residues 109–115 and serine 120; that span reads TRSGGHD. Positions 114-176 form a cross-link, 6-(S-cysteinyl)-8alpha-(pros-histidyl)-FAD (His-Cys); it reads HDSEGMSYIS…ENLSLAAGYC (63 aa). Asparagine 168 carries an N-linked (GlcNAc...) asparagine glycan. FAD contacts are provided by residues cysteine 176, 180 to 184, tyrosine 190, glutamate 236, and isoleucine 241; that span reads CAGGH. Residue histidine 291 participates in cannabigerolate binding. N-linked (GlcNAc...) asparagine glycans are attached at residues asparagine 296, asparagine 304, and asparagine 328. 2 residues coordinate cannabigerolate: tyrosine 416 and glutamate 441. FAD is bound at residue 480-482; it reads YLN. Tyrosine 483 serves as the catalytic Proton acceptor. The N-linked (GlcNAc...) asparagine glycan is linked to asparagine 498.

Belongs to the oxygen-dependent FAD-linked oxidoreductase family. Monomer. The cofactor is FAD. Glycosylated. Post-translationally, the FAD cofactor is bound via a bicovalent 6-S-cysteinyl, 8alpha-N1-histidyl FAD linkage. Expressed in young leaves.

The protein resides in the secreted. It localises to the extracellular space. The protein localises to the apoplast. The enzyme catalyses cannabigerolate + O2 = cannabidiolate + H2O2. It participates in secondary metabolite biosynthesis; terpenoid biosynthesis. Inhibited by Hg(2+). Oxidoreductase involved in the biosynthesis of cannabinoids-related terpenophenolic natural products, which have pharmacological activity. Catalyzes the stereoselective oxidative cyclization of the monoterpene moiety in cannabigerolic acid (CBGA), producing cannabidiolate (CBDA), the major cannabioid in fiber-type Cannabis plants. Can also use cannabinerolic acid as substrate, but not cannabigerol or cannabinerol. The chain is Cannabidiolic acid synthase from Cannabis sativa (Hemp).